The chain runs to 481 residues: 2-succinylbenzoate--CoA ligase (481 aa).

It belongs to the ATP-dependent AMP-binding enzyme family. MenE subfamily.

The enzyme catalyses 2-succinylbenzoate + ATP + CoA = 2-succinylbenzoyl-CoA + AMP + diphosphate. Its pathway is quinol/quinone metabolism; 1,4-dihydroxy-2-naphthoate biosynthesis; 1,4-dihydroxy-2-naphthoate from chorismate: step 5/7. It functions in the pathway quinol/quinone metabolism; menaquinone biosynthesis. Converts 2-succinylbenzoate (OSB) to 2-succinylbenzoyl-CoA (OSB-CoA). The protein is 2-succinylbenzoate--CoA ligase of Bacillus mycoides (strain KBAB4) (Bacillus weihenstephanensis).